The following is a 224-amino-acid chain: Large ribosomal subunit protein uL4 (224 aa).

The tract at residues 54–73 is disordered; the sequence is NRSEVSHSTKKPFRQKGTGN.

This sequence belongs to the universal ribosomal protein uL4 family. In terms of assembly, part of the 50S ribosomal subunit.

Functionally, one of the primary rRNA binding proteins, this protein initially binds near the 5'-end of the 23S rRNA. It is important during the early stages of 50S assembly. It makes multiple contacts with different domains of the 23S rRNA in the assembled 50S subunit and ribosome. In terms of biological role, forms part of the polypeptide exit tunnel. The polypeptide is Large ribosomal subunit protein uL4 (Chlamydia felis (strain Fe/C-56) (Chlamydophila felis)).